Here is a 640-residue protein sequence, read N- to C-terminus: Acid beta-fructofuranosidase 2, vacuolar (640 aa).

Residues 1–22 are disordered; it reads MDTNTTSYTPLPGDPFLSGPPE. Topologically, residues 1-29 are cytoplasmic; it reads MDTNTTSYTPLPGDPFLSGPPETPRRPLK. The propeptide at 1–78 is removed in mature form; sequence MDTNTTSYTP…HPQSTTNTML (78 aa). Residues 30 to 49 form a helical membrane-spanning segment; sequence GFAVIFASVIFLMSLVALII. Residues 50–616 lie on the Lumenal side of the membrane; sequence HQGPQQPPDV…FSPDAASHSS (567 aa). Substrate-binding positions include 93-96, Gln-112, Trp-120, 155-156, 219-220, Glu-274, and Asp-307; these read WMND, WT, and RD. The active site involves Asp-96. Cys-464 and Cys-512 are disulfide-bonded. Residues 617–639 traverse the membrane as a helical segment; that stretch reads FTPVTVFIKFIVPFGIFLTLYFV. Residue Arg-640 is a topological domain, cytoplasmic.

This sequence belongs to the glycosyl hydrolase 32 family. Expressed in buds, stems, roots and leaves.

The protein localises to the membrane. It localises to the vacuole membrane. It catalyses the reaction Hydrolysis of terminal non-reducing beta-D-fructofuranoside residues in beta-D-fructofuranosides.. Vacuolar invertase. The chain is Acid beta-fructofuranosidase 2, vacuolar from Rosa hybrid cultivar.